The primary structure comprises 532 residues: Cytokinin dehydrogenase 8 (532 aa).

An N-terminal signal peptide occupies residues 1-26 (MELKAMYLYAAVLAVLLCSSVNFIQS). An FAD-binding PCMH-type domain is found at 51-238 (VSDAPFAVMR…TRARIPLQLA (188 aa)). FAD-binding residues include alanine 87, glycine 89, and glycine 91. The residue at position 92 (histidine 92) is a Pros-8alpha-FAD histidine. Residues serine 93, glutamine 97, aspartate 162, threonine 167, serine 173, isoleucine 177, and isoleucine 228 each contribute to the FAD site. A glycan (N-linked (GlcNAc...) asparagine) is linked at asparagine 420. Positions 482 and 520 each coordinate FAD.

It belongs to the oxygen-dependent FAD-linked oxidoreductase family. Monomer. The cofactor is FAD.

It is found in the secreted. It localises to the extracellular space. It catalyses the reaction N(6)-dimethylallyladenine + A + H2O = 3-methyl-2-butenal + adenine + AH2. Catalyzes the oxidation of cytokinins, a family of N(6)-substituted adenine derivatives that are plant hormones, where the substituent is an isopentenyl group. The sequence is that of Cytokinin dehydrogenase 8 (CKX8) from Oryza sativa subsp. indica (Rice).